A 969-amino-acid chain; its full sequence is Lateral signaling target protein 2 homolog (969 aa).

Residue Lys-87 forms a Glycyl lysine isopeptide (Lys-Gly) (interchain with G-Cter in ubiquitin) linkage. Disordered regions lie at residues 290 to 323 (QDGE…GVEE), 336 to 360 (SVWK…EEPI), 390 to 437 (STLL…YHDD), and 715 to 777 (RSEC…DMSE). The span at 295–310 (PTSSTNDPSASTGPDS) shows a compositional bias: polar residues. Positions 336–346 (SVWKEEEEKQV) are enriched in basic and acidic residues. Residues 391–402 (TLLSPPSQNQSP) are compositionally biased toward polar residues. A compositionally biased stretch (low complexity) spans 411 to 423 (GSSLEGSSATSST). Residues 715–729 (RSECFGKQSKDDNRK) show a composition bias toward basic and acidic residues. 2 stretches are compositionally biased toward low complexity: residues 732-745 (SSSQ…VPSS) and 756-769 (SLSS…VSSL). The segment at 899-959 (DEACNSCIAC…VCTHCYMFHV (61 aa)) adopts an FYVE-type zinc-finger fold. Zn(2+)-binding residues include Cys-905, Cys-908, Cys-921, Cys-924, Cys-929, Cys-932, Cys-951, and Cys-954.

This sequence belongs to the lst-2 family. Post-translationally, monoubiquitination at Lys-87 prevents binding to phosphatidylinositol 3-phosphate (PI3P) and localization to early endosome membranes.

It is found in the cytoplasm. The protein localises to the cytosol. It localises to the early endosome membrane. Its function is as follows. Negative regulator of epidermal growth factor receptor (EGFR) signaling. Acts by promoting EGFR degradation in endosomes when not monoubiquitinated. The chain is Lateral signaling target protein 2 homolog (zfyve28) from Danio rerio (Zebrafish).